Reading from the N-terminus, the 249-residue chain is Pleckstrin homology domain-containing family F member 2 (249 aa).

Phosphoserine is present on Ser-16. In terms of domain architecture, PH spans 35 to 131 (VLIGEGVLTK…WMNHINKCVT (97 aa)). Position 44 is an N6-acetyllysine (Lys-44). The FYVE-type zinc finger occupies 152–212 (DSEATVCMRC…ICDFCYDLLS (61 aa)). The Zn(2+) site is built by Cys-158, Cys-161, Cys-175, Cys-178, Cys-183, Cys-186, Cys-204, and Cys-207. Residues 221-233 (PARSDSYSQSLKS) show a composition bias toward polar residues. Residues 221 to 249 (PARSDSYSQSLKSPLNDMSDDDDDDDSSD) are disordered. The segment covering 238-249 (MSDDDDDDDSSD) has biased composition (acidic residues). Phosphoserine is present on residues Ser-239 and Ser-248.

In terms of assembly, may interact with EEA1. As to expression, expressed in placenta, ovary and small intestine, as well as in heart and pancreas. Also expressed in peripheral blood mononuclear cells and dendritic cells.

It is found in the early endosome membrane. Its subcellular location is the endoplasmic reticulum. Functionally, may play a role in early endosome fusion upstream of RAB5, hence regulating receptor trafficking and fluid-phase transport. Enhances cellular sensitivity to TNF-induced apoptosis. The polypeptide is Pleckstrin homology domain-containing family F member 2 (PLEKHF2) (Homo sapiens (Human)).